Here is a 473-residue protein sequence, read N- to C-terminus: RuvB-like helicase 2 (473 aa).

Residue 76–83 participates in ATP binding; that stretch reads GPPSTGKT.

This sequence belongs to the RuvB family. In terms of assembly, may form heterododecamers with RVB1. Component of the SWR1 chromatin remodeling complex, the INO80 chromatin remodeling complex, and of the R2TP complex.

It is found in the nucleus. It carries out the reaction ATP + H2O = ADP + phosphate + H(+). Its function is as follows. DNA helicase which participates in several chromatin remodeling complexes, including the SWR1 and the INO80 complexes. The SWR1 complex mediates the ATP-dependent exchange of histone H2A for the H2A variant HZT1 leading to transcriptional regulation of selected genes by chromatin remodeling. The INO80 complex remodels chromatin by shifting nucleosomes and is involved in DNA repair. Also involved in pre-rRNA processing. The sequence is that of RuvB-like helicase 2 (RVB2) from Gibberella zeae (strain ATCC MYA-4620 / CBS 123657 / FGSC 9075 / NRRL 31084 / PH-1) (Wheat head blight fungus).